Consider the following 497-residue polypeptide: Probable pectinesterase 30 (497 aa).

The N-terminal stretch at 1–21 is a signal peptide; sequence MLVKVFSFFILMIIMVIGVSK. N-linked (GlcNAc...) asparagine glycans are attached at residues Asn238 and Asn254. Residue Thr263 coordinates substrate. The Proton donor role is filled by Asp316. An intrachain disulfide couples Cys330 to Cys350. Residue Asp337 is the Nucleophile of the active site. An N-linked (GlcNAc...) asparagine glycan is attached at Asn385. Positions 403 and 405 each coordinate substrate.

Belongs to the pectinesterase family. As to expression, expressed in siliques.

It is found in the secreted. The protein localises to the cell wall. It carries out the reaction [(1-&gt;4)-alpha-D-galacturonosyl methyl ester](n) + n H2O = [(1-&gt;4)-alpha-D-galacturonosyl](n) + n methanol + n H(+). The protein operates within glycan metabolism; pectin degradation; 2-dehydro-3-deoxy-D-gluconate from pectin: step 1/5. Functionally, acts in the modification of cell walls via demethylesterification of cell wall pectin. This chain is Probable pectinesterase 30 (PME30), found in Arabidopsis thaliana (Mouse-ear cress).